The following is a 704-amino-acid chain: MSMFNTISREFQYGNEQVVIETGRIARQANSVLVHMGGVSVLVAVVVKSDAKEGQNFFPLTVNYQEKMYAAGKIPGAYGKREGRPTEFETLTSRLIDRPIRPLFPEGYVNEIQITATVISSDKKHYADIAAMIGASAALSISDAPFNGPIGGARVGFINGEYVLNPSIEELKSSDLDLVVAGTKSAVLMVESEAAELSEDQMLGAVLYGHEQQQIVIDNIAELAKAVGTQKQDFVAPELNAELKEKVTTQFGEQVAEAYAISDKQARYEKLDEIKAAAIDALAGDPESEEFAEKEAQIKEIYNDLKYRTVRDAILSGKPRIDGRDLDTVRALDIQVGVLPYTHGSALFTRGETQALVTTTLGNSRDVNLIDSLAGTIQDHFMLHYNFPHYSVGETGREGVPKRREIGHGRLARRGVQAMLPDSDRFPYVIRVVSEITESNGSSSMASVCGASLALMDAGVPLKAPVAGIAMGLVKEGDRFAVLSDILGDEDHLGDMDFKVAGTKDGITALQMDIKIEGITSDIMEKALEQAHAGRIHILNAMNEVLPASRTEINAHAPNYAVIEINSDKIRDVIGKGGATIRQLTEDTGAVIDIDDNGTIRIFGENKAATKEAIRQIEAITAEVEVGKVYKGTVARVVDFGAFVTVLPGTDGLVHISQIADERVESVSDYLSEGQQINVLVQDVDNRGRIKLTMKGVEQEQTQA.

Positions 491 and 497 each coordinate Mg(2+). The KH domain maps to 558–617 (PNYAVIEINSDKIRDVIGKGGATIRQLTEDTGAVIDIDDNGTIRIFGENKAATKEAIRQI). The S1 motif domain occupies 627–695 (GKVYKGTVAR…NRGRIKLTMK (69 aa)).

It belongs to the polyribonucleotide nucleotidyltransferase family. Component of the RNA degradosome, which is a multiprotein complex involved in RNA processing and mRNA degradation. Mg(2+) is required as a cofactor.

The protein localises to the cytoplasm. The catalysed reaction is RNA(n+1) + phosphate = RNA(n) + a ribonucleoside 5'-diphosphate. Functionally, involved in mRNA degradation. Catalyzes the phosphorolysis of single-stranded polyribonucleotides processively in the 3'- to 5'-direction. The chain is Polyribonucleotide nucleotidyltransferase from Psychrobacter sp. (strain PRwf-1).